We begin with the raw amino-acid sequence, 105 residues long: Flagellar transcriptional regulator FlhD (105 aa).

This sequence belongs to the FlhD family. Homodimer; disulfide-linked. Forms a heterohexamer composed of two FlhC and four FlhD subunits. Each FlhC binds a FlhD dimer, forming a heterotrimer, and a hexamer assembles by dimerization of two heterotrimers.

It is found in the cytoplasm. Functions in complex with FlhC as a master transcriptional regulator that regulates transcription of several flagellar and non-flagellar operons by binding to their promoter region. Activates expression of class 2 flagellar genes, including fliA, which is a flagellum-specific sigma factor that turns on the class 3 genes. Also regulates genes whose products function in a variety of physiological pathways. The protein is Flagellar transcriptional regulator FlhD of Ralstonia nicotianae (strain ATCC BAA-1114 / GMI1000) (Ralstonia solanacearum).